Here is a 459-residue protein sequence, read N- to C-terminus: MNSRLQEIRERQKLRRQLLAQQLGAENADSIGAVLNSKDDQREIAETRETCRASYDTSAPNAKRKYPDEGEADEEEIEEYKDEVELQQDEENLPYEEEIYKDSSTFLKGTQSLNPHNDYCQHFVDTGHRPQNFIRDVGLADRFEEYPKLRELIRLKDELISKSNTPPMYLQADLEAFDIRELKSKFDVILLEPPLEEYYRETGITANEKCWTWDDIMKLEIEEIAAPRSFVFLWCGSGEGLDLGRVCLRKWGYRRCEDICWIKTNKNNPGKTKTLDPKAVFQRTKEHCLMGIKGTVRRSTDGDFIHANVDIDLIITEEPEIGNIEKPVEIFHIIEHFCLGRRRLHLFGRDSTIRPGWLTVGPTLTNSNFNAETYSSYFTAPNSHLTGCTEEIERLRPKSPPPKSKSDRGGGAPRGGGRGGTSAGRGERGRERNRTNFRGERGGFRGGRGGTHRGGFPTR.

A disordered region spans residues 50–73 (TCRASYDTSAPNAKRKYPDEGEAD). Interaction with METTL3 stretches follow at residues 135-136 (RD) and 237-238 (SG). Residues 245 to 254 (RVCLRKWGYR) are positively charged region required for RNA-binding. 2 interaction with METTL3 regions span residues 255 to 258 (RCED) and 278 to 287 (KAVFQRTKEH). The interval 297–298 (RR) is positively charged region required for RNA-binding. An interaction with METTL3 region spans residues 308–312 (NVDID). Residues 392–459 (IERLRPKSPP…GTHRGGFPTR (68 aa)) form a disordered region. Positions 409–423 (GGGAPRGGGRGGTSA) are enriched in gly residues. Residues 425–443 (RGERGRERNRTNFRGERGG) show a composition bias toward basic and acidic residues. The span at 444-453 (FRGGRGGTHR) shows a compositional bias: gly residues.

This sequence belongs to the MT-A70-like family. Heterodimer; heterodimerizes with METTL3 to form an antiparallel heterodimer that constitutes an active methyltransferase. Component of the WMM complex, a N6-methyltransferase complex composed of a catalytic subcomplex, named MAC, and of an associated subcomplex, named MACOM. The MAC subcomplex is composed of METTL3 and METTL14.

The protein resides in the nucleus. In terms of biological role, the METTL3-METTL14 heterodimer forms a N6-methyltransferase complex that methylates adenosine residues at the N(6) position of some mRNAs and regulates the circadian clock, differentiation of embryonic stem cells and cortical neurogenesis. In the heterodimer formed with METTL3, METTL14 constitutes the RNA-binding scaffold that recognizes the substrate rather than the catalytic core. N6-methyladenosine (m6A), which takes place at the 5'-[AG]GAC-3' consensus sites of some mRNAs, plays a role in mRNA stability and processing. In Gallus gallus (Chicken), this protein is N(6)-adenosine-methyltransferase non-catalytic subunit METTL14 (METTL14).